Reading from the N-terminus, the 390-residue chain is Transforming growth factor beta-1 proprotein (390 aa).

A signal peptide spans 1 to 29; the sequence is MPPSGLRLLPLLLPLPWLLVLTPGRPAAG. The tract at residues 30 to 74 is straightjacket domain; the sequence is LSTCKTIDMELVKRKRIEAIRGQILSKLRLASPPSQGEVPPGPLP. The interval 75-271 is arm domain; sequence EAVLALYNST…ATPLERAQHL (197 aa). Asn-82, Asn-136, and Asn-176 each carry an N-linked (GlcNAc...) asparagine glycan. The segment at 226–252 is bowtie tail; it reads DSKDNVLHVEINGISPKRRGDLGTIHD. Positions 244-246 match the Cell attachment site motif; it reads RGD. Intrachain disulfides connect Cys-285–Cys-294, Cys-293–Cys-356, Cys-322–Cys-387, and Cys-326–Cys-389.

This sequence belongs to the TGF-beta family. In terms of assembly, homodimer; disulfide-linked. Interacts with the serine proteases, HTRA1 and HTRA3: the interaction with either inhibits TGFB1-mediated signaling and the HTRA protease activity is required for this inhibition. May interact with THSD4; this interaction may lead to sequestration by FBN1 microfibril assembly and attenuation of TGFB signaling. Interacts with CD109, DPT and ASPN. Interacts with EFEMP2. Interacts with TSKU; the interaction contributes to regulation of the hair cycle. Interacts with TGFBR3. Homodimer; disulfide-linked. Interacts with transforming growth factor beta-1 (TGF-beta-1) chain; interaction is non-covalent and maintains TGF-beta-1 in a latent state; each latency-associated peptide (LAP) monomer interacts with TGF-beta-1 in the other monomer. Interacts with LTBP1; leading to regulation of TGF-beta-1 activation. Interacts with LRRC32/GARP; leading to regulation of TGF-beta-1 activation on the surface of activated regulatory T-cells (Tregs). Interacts with LRRC33/NRROS; leading to regulation of TGF-beta-1 activation in macrophages and microglia. Interacts (via cell attachment site) with integrins ITGAV and ITGB6 (ITGAV:ITGB6), leading to release of the active TGF-beta-1. Interacts with NREP; the interaction results in a decrease in TGFB1 autoinduction. Interacts with HSP90AB1; inhibits latent TGFB1 activation. As to quaternary structure, homodimer; disulfide-linked. Interacts with TGF-beta receptors (TGFBR1 and TGFBR2), leading to signal transduction. Post-translationally, transforming growth factor beta-1 proprotein: The precursor proprotein is cleaved in the Golgi apparatus by FURIN to form Transforming growth factor beta-1 (TGF-beta-1) and Latency-associated peptide (LAP) chains, which remain non-covalently linked, rendering TGF-beta-1 inactive. N-glycosylated. Deglycosylation leads to activation of Transforming growth factor beta-1 (TGF-beta-1); mechanisms triggering deglycosylation-driven activation of TGF-beta-1 are however unclear. Abundant in the bone matrix. Expressed in cardiomyocytes.

It is found in the secreted. Its subcellular location is the extracellular space. The protein localises to the extracellular matrix. Its function is as follows. Transforming growth factor beta-1 proprotein: Precursor of the Latency-associated peptide (LAP) and Transforming growth factor beta-1 (TGF-beta-1) chains, which constitute the regulatory and active subunit of TGF-beta-1, respectively. Required to maintain the Transforming growth factor beta-1 (TGF-beta-1) chain in a latent state during storage in extracellular matrix. Associates non-covalently with TGF-beta-1 and regulates its activation via interaction with 'milieu molecules', such as LTBP1, LRRC32/GARP and LRRC33/NRROS, that control activation of TGF-beta-1. Interaction with LRRC33/NRROS regulates activation of TGF-beta-1 in macrophages and microglia. Interaction with LRRC32/GARP controls activation of TGF-beta-1 on the surface of activated regulatory T-cells (Tregs). Interaction with integrins (ITGAV:ITGB6 or ITGAV:ITGB8) results in distortion of the Latency-associated peptide chain and subsequent release of the active TGF-beta-1. Functionally, multifunctional protein that regulates the growth and differentiation of various cell types and is involved in various processes, such as normal development, immune function, microglia function and responses to neurodegeneration. Activation into mature form follows different steps: following cleavage of the proprotein in the Golgi apparatus, Latency-associated peptide (LAP) and Transforming growth factor beta-1 (TGF-beta-1) chains remain non-covalently linked rendering TGF-beta-1 inactive during storage in extracellular matrix. At the same time, LAP chain interacts with 'milieu molecules', such as LTBP1, LRRC32/GARP and LRRC33/NRROS that control activation of TGF-beta-1 and maintain it in a latent state during storage in extracellular milieus. TGF-beta-1 is released from LAP by integrins (ITGAV:ITGB6 or ITGAV:ITGB8): integrin-binding to LAP stabilizes an alternative conformation of the LAP bowtie tail and results in distortion of the LAP chain and subsequent release of the active TGF-beta-1. Once activated following release of LAP, TGF-beta-1 acts by binding to TGF-beta receptors (TGFBR1 and TGFBR2), which transduce signal. While expressed by many cells types, TGF-beta-1 only has a very localized range of action within cell environment thanks to fine regulation of its activation by Latency-associated peptide chain (LAP) and 'milieu molecules'. Plays an important role in bone remodeling: acts as a potent stimulator of osteoblastic bone formation, causing chemotaxis, proliferation and differentiation in committed osteoblasts. Can promote either T-helper 17 cells (Th17) or regulatory T-cells (Treg) lineage differentiation in a concentration-dependent manner. At high concentrations, leads to FOXP3-mediated suppression of RORC and down-regulation of IL-17 expression, favoring Treg cell development. At low concentrations in concert with IL-6 and IL-21, leads to expression of the IL-17 and IL-23 receptors, favoring differentiation to Th17 cells. Stimulates sustained production of collagen through the activation of CREB3L1 by regulated intramembrane proteolysis (RIP). Mediates SMAD2/3 activation by inducing its phosphorylation and subsequent translocation to the nucleus. Positively regulates odontoblastic differentiation in dental papilla cells, via promotion of IPO7-mediated translocation of phosphorylated SMAD2 to the nucleus and subsequent transcription of target genes. Can induce epithelial-to-mesenchymal transition (EMT) and cell migration in various cell types. The protein is Transforming growth factor beta-1 proprotein (Tgfb1) of Rattus norvegicus (Rat).